Consider the following 692-residue polypeptide: Potassium-transporting ATPase ATP-binding subunit (692 aa).

Transmembrane regions (helical) follow at residues 35 to 55 (VMFI…KDLY), 64 to 84 (LQIS…EAIA), 213 to 233 (IALT…VMSL), and 254 to 274 (ILIS…LSAI). The 4-aspartylphosphate intermediate role is filled by aspartate 307. ATP contacts are provided by residues aspartate 344, glutamate 348, 377-384 (FSASTKMS), and lysine 400. Mg(2+)-binding residues include aspartate 523 and aspartate 527. A run of 3 helical transmembrane segments spans residues 592–612 (YFAI…VGPL), 626–646 (AVLS…PLAL), and 672–692 (MVIP…LGII).

This sequence belongs to the cation transport ATPase (P-type) (TC 3.A.3) family. Type IA subfamily. As to quaternary structure, the system is composed of three essential subunits: KdpA, KdpB and KdpC.

The protein localises to the cell inner membrane. The catalysed reaction is K(+)(out) + ATP + H2O = K(+)(in) + ADP + phosphate + H(+). In terms of biological role, part of the high-affinity ATP-driven potassium transport (or Kdp) system, which catalyzes the hydrolysis of ATP coupled with the electrogenic transport of potassium into the cytoplasm. This subunit is responsible for energy coupling to the transport system and for the release of the potassium ions to the cytoplasm. The sequence is that of Potassium-transporting ATPase ATP-binding subunit from Leptospira interrogans serogroup Icterohaemorrhagiae serovar Lai (strain 56601).